A 1081-amino-acid chain; its full sequence is MVSPPGVLSSLLLLAAMAGGSSQQCSEGRTYSDAIISPNLESIRIMRVSHTFSVGDCTAACCDLPSCDLAWWFEGSCYLVNCMRPENCEPRTTGPIRSYLTFVRRPVQRSGQLLDYGDMMLGRGSPSGAWGDSLEDLRKDLPFLGKDGGPEETAEYSDDYKELERGLLQPSNQQDPRGSAEYPDWSLLPSSDGDFNASATGDNSAASTEKLQDLTPYPLDQEQLQSLNESTWSPTPRHSEMSSMWPSSVTASPTEEGLEGEETLQLQEQPNNSSGKKVPMPSHNPSPASLESSPTTVEKSSIFTVTPWSRDPGTPTFPASTVLPGLISPSWPLSPTTSRTVKALAVSAGDNLVLTLPNGEAELKASVEPAPPADTAYTYEWSLMSHPVDFQGKIKQENKPTLHLSQLSVGLYAFRVAVSGENAFGEGYVNVTVMPAARINQPPVAIVSPQIQELSLPLTSALIDGSQSTDDAEIVSYHWEEVDGPFLGEAFLDDSPLLRLSNLDPGNYTFRLTITDSDGATNSTTAALIIRGSLDYPPVANAGPNQTITLPQNTIILNGNQSSDDHQIVLYEWFPDPGGESKEMVMQGAQTPYLHLSELQEGEYTFQLMVTDSSGQQSTALVTLTVQAENNQAPVAVAGPDKELVFPVQSAMLDGSRSSDDHGIVCYRWEHIRGPSAVEMENVDKAIATVTGLQVGTYHFRLTVRDQQGLSSTSTLTVAVKKENNSPPRAQAGGRHVLMLPNNSITLDGSRSTDDRGIVSYLWIRDGQSPAAGDIIGSSDNGAALQLTNLVEGVYTFHLLVTDSQGASDSDTAIVEVLPDPKKDGMVELILQVGVEQLTEQQKETLVRQLAVLLNVLDSDVKVLKIQAHTDVSTVIVFYVQSGSPFKVLRAADVARNLHKRLSKEKGAFLLFKVLRIDTAGCLLKCSGHGHCDPITKRCICSQLWMENLLQRYMWDGESNCEWSVFYVAALALTLTVLTGAVTWVCICCCRRRKRTKIRKKTKYTILDNMDEQERMELRPKYGIKHRSTEHNSSLMVSESEFESDQDTLFSQERMERGVLKGSLNGSARSGVSFGYYSKDR.

Residues 1–22 form the signal peptide; it reads MVSPPGVLSSLLLLAAMAGGSS. Residues 23-99 form the MANSC domain; the sequence is QQCSEGRTYS…PRTTGPIRSY (77 aa). Residues 23–964 lie on the Extracellular side of the membrane; that stretch reads QQCSEGRTYS…WDGESNCEWS (942 aa). Disordered stretches follow at residues 141 to 160, 168 to 216, and 228 to 298; these read LPFLGKDGGPEETAEYSDDY, LQPS…DLTP, and NEST…TTVE. Polar residues-rich tracts occupy residues 197–209, 228–253, and 283–298; these read ASATGDNSAASTE, NESTWSPTPRHSEMSSMWPSSVTASP, and HNPSPASLESSPTTVE. PKD domains follow at residues 345-436, 444-533, 539-629, 630-723, and 729-820; these read AVSA…VMPA, VAIV…IRGS, VANA…VQAE, NNQA…VKKE, and RAQA…VLPD. 2 N-linked (GlcNAc...) asparagine glycosylation sites follow: Asn-430 and Asn-522. The chain crosses the membrane as a helical span at residues 965–985; it reads VFYVAALALTLTVLTGAVTWV. The Cytoplasmic portion of the chain corresponds to 986–1081; it reads CICCCRRRKR…VSFGYYSKDR (96 aa). The short motif at 1004-1007 is the Endocytosis signal element; sequence YTIL.

As to quaternary structure, homodimer. Interacts with AP2M1; required for clathrin-mediated endocytosis. N-glycosylated. Post-translationally, O-glycosylated. In terms of processing, shedding of the extracellular domain and intramembrane cleavage produce several proteolytic products. The intramembrane cleavage releases a soluble cytoplasmic polypeptide that translocates to the nucleolus. In terms of tissue distribution, highly expressed during development in ventricular zone, intermediate zone, cortical plate, striatum, hippocampus, and brain stem.

The protein resides in the cell membrane. It is found in the early endosome membrane. Functionally, involved in neuronal migration during development of the cerebral neocortex. May function in a cell autonomous and a non-cell autonomous manner and play a role in appropriate adhesion between migrating neurons and radial glial fibers. May also regulate growth and differentiation of dendrites. This Rattus norvegicus (Rat) protein is Dyslexia-associated protein KIAA0319 homolog.